Reading from the N-terminus, the 469-residue chain is Mitochondrial distribution and morphology protein 10 (469 aa).

Belongs to the MDM10 family. As to quaternary structure, component of the ER-mitochondria encounter structure (ERMES) or MDM complex, composed of MMM1, MDM10, MDM12 and MDM34. Associates with the mitochondrial outer membrane sorting assembly machinery SAM(core) complex.

The protein resides in the mitochondrion outer membrane. In terms of biological role, component of the ERMES/MDM complex, which serves as a molecular tether to connect the endoplasmic reticulum and mitochondria. Components of this complex are involved in the control of mitochondrial shape and protein biogenesis and may function in phospholipid exchange. MDM10 is involved in the late assembly steps of the general translocase of the mitochondrial outer membrane (TOM complex). Functions in the TOM40-specific route of the assembly of outer membrane beta-barrel proteins, including the association of TOM40 with the receptor TOM22 and small TOM proteins. Can associate with the SAM(core) complex as well as the MDM12-MMM1 complex, both involved in late steps of the major beta-barrel assembly pathway, that is responsible for biogenesis of all outer membrane beta-barrel proteins. May act as a switch that shuttles between both complexes and channels precursor proteins into the TOM40-specific pathway. Plays a role in mitochondrial morphology and in the inheritance of mitochondria. The sequence is that of Mitochondrial distribution and morphology protein 10 from Scheffersomyces stipitis (strain ATCC 58785 / CBS 6054 / NBRC 10063 / NRRL Y-11545) (Yeast).